We begin with the raw amino-acid sequence, 294 residues long: 4-hydroxy-tetrahydrodipicolinate synthase (294 aa).

T45 provides a ligand contact to pyruvate. Catalysis depends on Y133, which acts as the Proton donor/acceptor. The active-site Schiff-base intermediate with substrate is K161. Residue I203 coordinates pyruvate.

The protein belongs to the DapA family. Homotetramer; dimer of dimers.

It is found in the cytoplasm. It carries out the reaction L-aspartate 4-semialdehyde + pyruvate = (2S,4S)-4-hydroxy-2,3,4,5-tetrahydrodipicolinate + H2O + H(+). The protein operates within amino-acid biosynthesis; L-lysine biosynthesis via DAP pathway; (S)-tetrahydrodipicolinate from L-aspartate: step 3/4. Catalyzes the condensation of (S)-aspartate-beta-semialdehyde [(S)-ASA] and pyruvate to 4-hydroxy-tetrahydrodipicolinate (HTPA). The sequence is that of 4-hydroxy-tetrahydrodipicolinate synthase from Shewanella pealeana (strain ATCC 700345 / ANG-SQ1).